Reading from the N-terminus, the 528-residue chain is GMP synthase [glutamine-hydrolyzing] (528 aa).

One can recognise a Glutamine amidotransferase type-1 domain in the interval Ala-13–Asp-204. Cys-90 serves as the catalytic Nucleophile. Residues His-178 and Glu-180 contribute to the active site. A GMPS ATP-PPase domain is found at Trp-205–Arg-403. Ser-232–Ser-238 is an ATP binding site.

As to quaternary structure, homodimer.

It carries out the reaction XMP + L-glutamine + ATP + H2O = GMP + L-glutamate + AMP + diphosphate + 2 H(+). It participates in purine metabolism; GMP biosynthesis; GMP from XMP (L-Gln route): step 1/1. In terms of biological role, catalyzes the synthesis of GMP from XMP. The sequence is that of GMP synthase [glutamine-hydrolyzing] from Synechococcus sp. (strain CC9311).